The primary structure comprises 374 residues: Lipopolysaccharide glucosyltransferase WaaG (374 aa).

Residues glycine 15 and aspartate 19 each contribute to the UDP-alpha-D-glucose site. The membrane-interacting region stretch occupies residues 103 to 132 (YAEKVAQEKGFLYRLTSRYRHYAAFERATF). Residues arginine 173, arginine 208, lysine 209, arginine 261, glutamate 281, alanine 283, glycine 284, isoleucine 285, valine 286, and glutamate 289 each coordinate UDP-alpha-D-glucose.

The protein belongs to the glycosyltransferase group 1 family. Glycosyltransferase 4 subfamily.

Its subcellular location is the cell inner membrane. Its pathway is bacterial outer membrane biogenesis; LPS core biosynthesis. Its activity is regulated as follows. Inhibited by divalent metal ions such as Mg(2+), Mn(2+), Ca(2+), Zn(2+), Co(2+), Ni(2+) and Cu(2+). In terms of biological role, glucosyltransferase involved in the biosynthesis of the core oligosaccharide region of lipopolysaccharide (LPS). Catalyzes the addition of the first outer-core glucose from UDP-glucose to the inner-core heptose II. Cannot use other sugar donors, such as UDP-galactose, UDP-glucuronic acid, UDP-galacuronic acid, GDP-mannose, ADP-glucose and GDP-glucose. In the absence of a lipid acceptor, can slowly hydrolyze UDP-glucose. This is Lipopolysaccharide glucosyltransferase WaaG from Escherichia coli (strain K12).